Consider the following 109-residue polypeptide: Cortistatin (109 aa).

Positions 1–25 (MMGGRGTGGKWPSAFGLLLLWGVAA) are cleaved as a signal peptide. The propeptide occupies 26–93 (SALPLESGPT…PPPQQPPHLD (68 aa)). Positions 64–97 (ASSSTPVGGGTPGLSKSQERPPPQQPPHLDKKPC) are disordered. Cys-97 and Cys-108 are disulfide-bonded.

This sequence belongs to the somatostatin family. Expressed in a subset of GABAergic cells in the cortex and hippocampus.

It localises to the secreted. The polypeptide is Cortistatin (Cort) (Mus musculus (Mouse)).